The primary structure comprises 132 residues: Translation initiation factor 2 subunit beta (132 aa).

The interval methionine 1–asparagine 30 is disordered.

It belongs to the eIF-2-beta/eIF-5 family. In terms of assembly, heterotrimer composed of an alpha, a beta and a gamma chain.

In terms of biological role, eIF-2 functions in the early steps of protein synthesis by forming a ternary complex with GTP and initiator tRNA. The chain is Translation initiation factor 2 subunit beta from Halobacterium salinarum (strain ATCC 29341 / DSM 671 / R1).